A 238-amino-acid chain; its full sequence is Endonuclease III homolog (238 aa).

A HhH domain is found at 129–155 (REKGLPREMKDLISLPGIGNKMALLYM). The Nucleophile; for N-glycosylase activity role is filled by Lys-149. [4Fe-4S] cluster contacts are provided by Cys-217, Cys-224, Cys-227, and Cys-233.

This sequence belongs to the Nth/MutY family. [4Fe-4S] cluster is required as a cofactor.

It is found in the nucleus. The protein localises to the mitochondrion. The enzyme catalyses 2'-deoxyribonucleotide-(2'-deoxyribose 5'-phosphate)-2'-deoxyribonucleotide-DNA = a 3'-end 2'-deoxyribonucleotide-(2,3-dehydro-2,3-deoxyribose 5'-phosphate)-DNA + a 5'-end 5'-phospho-2'-deoxyribonucleoside-DNA + H(+). In terms of biological role, bifunctional DNA N-glycosylase with associated apurinic/apyrimidinic (AP) lyase function that catalyzes the first step in base excision repair (BER), the primary repair pathway for the repair of oxidative DNA damage. The DNA N-glycosylase activity releases the damaged DNA base from DNA by cleaving the N-glycosidic bond, leaving an AP site. The AP lyase activity cleaves the phosphodiester bond 3' to the AP site by a beta-elimination. Primarily recognizes and repairs oxidative base damage of pyrimidines. This Encephalitozoon cuniculi (strain GB-M1) (Microsporidian parasite) protein is Endonuclease III homolog.